We begin with the raw amino-acid sequence, 270 residues long: Nuclear receptor-interacting protein 2 (270 aa).

Over residues 1 to 27 (MSTGQEARRDEGDSRKEQEASLRDRAH) the composition is skewed to basic and acidic residues. A disordered region spans residues 1 to 33 (MSTGQEARRDEGDSRKEQEASLRDRAHLSQQRQ). The interaction with NR1F2 stretch occupies residues 61-99 (KDLQPHSVIQRRLVEGNQRRLQGESPLLQALIRGHDSSR). The LXXLL motif motif lies at 192–196 (LQTLL).

In terms of assembly, interacts with NR1F2, RARA and THRB in a ligand-dependent manner. Expression is restricted to the central nervous system (neurons in the dentate gyrus of the hippocampus, the amygdala, thalamic and hypothalamic regions).

It localises to the nucleus. Its function is as follows. Down-regulates transcriptional activation by nuclear receptors, such as NR1F2. The polypeptide is Nuclear receptor-interacting protein 2 (Nrip2) (Mus musculus (Mouse)).